A 277-amino-acid polypeptide reads, in one-letter code: Thymidylate synthase (277 aa).

Arg21 lines the dUMP pocket. His51 provides a ligand contact to (6R)-5,10-methylene-5,6,7,8-tetrahydrofolate. Position 126–127 (126–127 (RR)) interacts with dUMP. Catalysis depends on Cys159, which acts as the Nucleophile. Residues 179–182 (RSAD), Asn190, and 220–222 (HLY) each bind dUMP. Asp182 is a binding site for (6R)-5,10-methylene-5,6,7,8-tetrahydrofolate. Position 276 (Ala276) interacts with (6R)-5,10-methylene-5,6,7,8-tetrahydrofolate.

The protein belongs to the thymidylate synthase family. Bacterial-type ThyA subfamily. In terms of assembly, homodimer.

It localises to the cytoplasm. It catalyses the reaction dUMP + (6R)-5,10-methylene-5,6,7,8-tetrahydrofolate = 7,8-dihydrofolate + dTMP. Its pathway is pyrimidine metabolism; dTTP biosynthesis. Functionally, catalyzes the reductive methylation of 2'-deoxyuridine-5'-monophosphate (dUMP) to 2'-deoxythymidine-5'-monophosphate (dTMP) while utilizing 5,10-methylenetetrahydrofolate (mTHF) as the methyl donor and reductant in the reaction, yielding dihydrofolate (DHF) as a by-product. This enzymatic reaction provides an intracellular de novo source of dTMP, an essential precursor for DNA biosynthesis. This chain is Thymidylate synthase, found in Thioalkalivibrio sulfidiphilus (strain HL-EbGR7).